The following is a 320-amino-acid chain: Small ribosomal subunit protein uS2 (320 aa).

Positions 254-320 (GDAAKAALPV…APATTGPVSE (67 aa)) are disordered. The span at 272–282 (VSAKNEAKSDD) shows a compositional bias: basic and acidic residues. Low complexity predominate over residues 308–320 (AEAAPATTGPVSE).

The protein belongs to the universal ribosomal protein uS2 family.

This is Small ribosomal subunit protein uS2 from Clavibacter sepedonicus (Clavibacter michiganensis subsp. sepedonicus).